The sequence spans 470 residues: Mitogen-activated protein kinase 15 (470 aa).

Residues 13 to 306 (FDLQKRLGKG…VEQCLVHPYV (294 aa)) form the Protein kinase domain. Residues 19–27 (LGKGAYGIV) and Lys42 each bind ATP. The active-site Proton acceptor is the Asp137. Thr178 is subject to Phosphothreonine. The TXY motif lies at 178 to 180 (TEY). Phosphotyrosine is present on Tyr180. Residues 362-445 (PYGEDKSRAP…PSSIKQRRRS (84 aa)) form a disordered region. The segment covering 394-406 (MDKNNSSSHDSSS) has biased composition (low complexity). Positions 409–426 (LRERAASAESRTSKDSNG) are enriched in basic and acidic residues.

The protein belongs to the protein kinase superfamily. CMGC Ser/Thr protein kinase family. MAP kinase subfamily. It depends on Mg(2+) as a cofactor. In terms of processing, dually phosphorylated on Thr-178 and Tyr-180, which activates the enzyme. As to expression, expressed in the URX neuron and in many other head sensory neurons. Isoform a: Expressed in head and tail ciliated sensory neurons, and in mid-body neurons. Isoform c: Expressed in head and tail ciliated sensory neurons, and in mid-body neurons.

It is found in the cell projection. Its subcellular location is the cilium. The protein resides in the cilium membrane. The protein localises to the cytoplasm. It localises to the cytoskeleton. It is found in the cilium axoneme. Its subcellular location is the cilium basal body. The protein resides in the cell junction. The protein localises to the perikaryon. It localises to the dendrite. The enzyme catalyses L-seryl-[protein] + ATP = O-phospho-L-seryl-[protein] + ADP + H(+). The catalysed reaction is L-threonyl-[protein] + ATP = O-phospho-L-threonyl-[protein] + ADP + H(+). Its activity is regulated as follows. Activated by threonine and tyrosine phosphorylation. In terms of biological role, atypical MAPK protein. Regulates primary cilium formation in sensory neurons and the localization of ciliary proteins involved in cilium structure, transport, and signaling. Acts in dopamine (DA) neurons to support synaptic membrane dat-1 availability via activation of rho-1 thereby sustaining normal levels of DA clearance. Plays a role in male mating behavior, probably in part through regulating the localization of the polycystin pkd-2. Functions postembryonically in the URX sensory neurons to constrain URX dendrite growth throughout lifetime, probably by restricting expansion of the subcellular sensory compartment at the dendrite ending. This is Mitogen-activated protein kinase 15 from Caenorhabditis elegans.